Reading from the N-terminus, the 805-residue chain is Arginine/serine-rich protein PNISR (805 aa).

Polar residues predominate over residues 75–88; that stretch reads NNHGNFQGDSNFNR. Disordered stretches follow at residues 75 to 331 and 382 to 805; these read NNHG…EEKE and LTGL…SRSR. Composition is skewed to pro residues over residues 100–115 and 183–194; these read PPHPPPEQPWMPPAPG and YWQPGPPGPPAP. A compositionally biased stretch (basic and acidic residues) spans 197–210; it reads NRRERPPSFRDRQR. Phosphoserine occurs at positions 204 and 211. Residue lysine 218 forms a Glycyl lysine isopeptide (Lys-Gly) (interchain with G-Cter in SUMO2) linkage. The stretch at 237–276 forms a coiled coil; sequence REGLEKMEREKQKKLEKERMEQQRSQLSKKEKKATEDAEG. The span at 238 to 258 shows a compositional bias: basic and acidic residues; that stretch reads EGLEKMEREKQKKLEKERMEQ. Phosphoserine occurs at positions 290, 304, 313, and 321. Over residues 290-299 the composition is skewed to acidic residues; the sequence is SDEEDEDAEN. Residues 384 to 393 are compositionally biased toward gly residues; it reads GLGGLGGYGS. A compositionally biased stretch (basic and acidic residues) spans 421–463; the sequence is QKQEAFWRKEKEQQLLQDKQIEEEKQQTERVTKEMNEFIHREQ. Residues 427-461 adopt a coiled-coil conformation; the sequence is WRKEKEQQLLQDKQIEEEKQQTERVTKEMNEFIHR. Residues serine 465 and serine 467 each carry the phosphoserine modification. Basic and acidic residues-rich tracts occupy residues 473-486 and 494-508; these read EADRDAVNDKKRTP and EPKREHKGKEKERGS. Threonine 485 is subject to Phosphothreonine. Residue lysine 496 forms a Glycyl lysine isopeptide (Lys-Gly) (interchain with G-Cter in SUMO2) linkage. Low complexity predominate over residues 509–550; it reads RSGSSSSGSSSSGSRTSSSSSSVSSSSYSSSSGSSCTSSRSS. Basic residues-rich tracts occupy residues 551 to 560, 567 to 579, 587 to 598, and 607 to 639; these read SPKRRKRPSR, KARRSRSRSYSRR, TRGKLRDRRRSN, and RRNRSPSRDRRRSRSRSRDRRTNRSSRSRSRDR. A compositionally biased stretch (basic and acidic residues) spans 659–721; the sequence is EAKEQDRKKE…KRKRESERTF (63 aa). A Glycyl lysine isopeptide (Lys-Gly) (interchain with G-Cter in SUMO2) cross-link involves residue lysine 703. Serine 726 carries the phosphoserine modification. A compositionally biased stretch (basic and acidic residues) spans 732–753; that stretch reads IRHDSRQDSKKNATKDSKRHSG. The segment covering 754-767 has biased composition (low complexity); that stretch reads SDSSGRSSSESPGS. 2 stretches are compositionally biased toward basic residues: residues 771–781 and 789–805; these read KKAKKPKHSRS and RSGKKASRKHKSKSRSR.

This sequence belongs to the splicing factor SR family. As to quaternary structure, interacts with PNN.

It is found in the nucleus speckle. In Mus musculus (Mouse), this protein is Arginine/serine-rich protein PNISR (Pnisr).